Reading from the N-terminus, the 115-residue chain is U3-lycotoxin-Ls1a (115 aa).

The N-terminal stretch at 1–20 is a signal peptide; it reads MKFVLLFGVLLVTFFSYSSA. Residues 21–44 constitute a propeptide that is removed on maturation; that stretch reads EMLDDFDQADEDELLSLIEKGEAR. 4 disulfides stabilise this stretch: C48-C63, C55-C72, C62-C87, and C74-C85.

The protein belongs to the neurotoxin 19 (CSTX) family. 01 subfamily. Expressed by the venom gland.

It localises to the secreted. In Lycosa singoriensis (Wolf spider), this protein is U3-lycotoxin-Ls1a.